Consider the following 210-residue polypeptide: Na(+)-translocating NADH-quinone reductase subunit D (210 aa).

6 consecutive transmembrane segments (helical) span residues 14–34, 42–62, 72–92, 103–123, 131–151, and 178–198; these read PIVS…ALAV, LVMT…ISML, IIVQ…VLQA, VFVG…AYAM, FMDG…VGFV, and NGLL…IWII.

The protein belongs to the NqrDE/RnfAE family. Composed of six subunits; NqrA, NqrB, NqrC, NqrD, NqrE and NqrF.

It localises to the cell inner membrane. The catalysed reaction is a ubiquinone + n Na(+)(in) + NADH + H(+) = a ubiquinol + n Na(+)(out) + NAD(+). In terms of biological role, NQR complex catalyzes the reduction of ubiquinone-1 to ubiquinol by two successive reactions, coupled with the transport of Na(+) ions from the cytoplasm to the periplasm. NqrA to NqrE are probably involved in the second step, the conversion of ubisemiquinone to ubiquinol. This is Na(+)-translocating NADH-quinone reductase subunit D from Shewanella woodyi (strain ATCC 51908 / MS32).